The chain runs to 205 residues: MSASPSPSITGLLLAGGRATRMDGADKGLQLLDGTPLALHVLRRLSPQVDETLISANRNADRYAELGAPFDARIVADETADFPGPLAGLLAGMRAARAPLVACAPCDTPYLPADVVARLHAALDAQQADIAMAVTVDAQHARSPQPTFALLRTSLADDLAAALAAGERKVRAWYARHKTVEVEFRDERAFYNANSWHELAALARR.

GTP-binding positions include 14–16, Lys-27, Asp-77, and Asp-107; that span reads LAG. Asp-107 contacts Mg(2+).

It belongs to the MobA family. As to quaternary structure, monomer. Mg(2+) serves as cofactor.

It localises to the cytoplasm. It catalyses the reaction Mo-molybdopterin + GTP + H(+) = Mo-molybdopterin guanine dinucleotide + diphosphate. Its function is as follows. Transfers a GMP moiety from GTP to Mo-molybdopterin (Mo-MPT) cofactor (Moco or molybdenum cofactor) to form Mo-molybdopterin guanine dinucleotide (Mo-MGD) cofactor. The protein is Molybdenum cofactor guanylyltransferase of Burkholderia ambifaria (strain ATCC BAA-244 / DSM 16087 / CCUG 44356 / LMG 19182 / AMMD) (Burkholderia cepacia (strain AMMD)).